The following is a 426-amino-acid chain: Dihydroorotase (426 aa).

Zn(2+) is bound by residues histidine 62 and histidine 64. Substrate-binding positions include 64-66 (HLR) and asparagine 96. Zn(2+) contacts are provided by aspartate 154, histidine 181, histidine 234, and aspartate 307. Aspartate 307 is an active-site residue. Histidine 311 is a substrate binding site.

Belongs to the metallo-dependent hydrolases superfamily. DHOase family. Class I DHOase subfamily. The cofactor is Zn(2+).

It carries out the reaction (S)-dihydroorotate + H2O = N-carbamoyl-L-aspartate + H(+). Its pathway is pyrimidine metabolism; UMP biosynthesis via de novo pathway; (S)-dihydroorotate from bicarbonate: step 3/3. Its function is as follows. Catalyzes the reversible cyclization of carbamoyl aspartate to dihydroorotate. This Syntrophus aciditrophicus (strain SB) protein is Dihydroorotase.